The sequence spans 356 residues: 11-beta-hydroxysteroid dehydrogenase (356 aa).

Residues 10–30 (LVVPPAGLLMLAFAWPSLAFF) traverse the membrane as a helical; Signal-anchor for type II membrane protein segment. Positions 13–26 (PPAGLLMLAFAWPS) match the Proline-knob motif. 54–85 (GASSGIGEQIAYQYAKRRANLVLVARREHRLR) contacts NADP(+). Residue Ser-184 coordinates substrate. Tyr-197 functions as the Proton acceptor in the catalytic mechanism. Residues 197-201 (YNAAK) and Lys-201 each bind NADP(+).

This sequence belongs to the short-chain dehydrogenases/reductases (SDR) family. As to expression, expressed in megagametophytes (at protein level).

The protein resides in the lipid droplet. It is found in the membrane. It carries out the reaction an 11beta-hydroxysteroid + NADP(+) = an 11-oxosteroid + NADPH + H(+). The catalysed reaction is corticosterone + NADP(+) = 11-dehydrocorticosterone + NADPH + H(+). It catalyses the reaction 17beta-estradiol + NADP(+) = estrone + NADPH + H(+). Its function is as follows. Has dehydrogenase activity against corticosterone (11 beta-hydroxysteroid) and estradiol (17 beta-hydroxysteroid) in the presence of NADP(+). May be involved in signal transduction regulated by various sterols. This Pinus massoniana (Chinese red pine) protein is 11-beta-hydroxysteroid dehydrogenase.